The chain runs to 174 residues: UPF0316 protein Dhaf_3052 (174 aa).

Helical transmembrane passes span 4–24 (ILQF…LTTI), 35–55 (VYAS…LSII), and 59–79 (LDSY…VYLG).

Belongs to the UPF0316 family.

Its subcellular location is the cell membrane. This chain is UPF0316 protein Dhaf_3052, found in Desulfitobacterium hafniense (strain DSM 10664 / DCB-2).